A 135-amino-acid polypeptide reads, in one-letter code: UPF0329 protein ECU07_1860/ECU10_0040/ECU11_2100 (135 aa).

It belongs to the UPF0329 family.

In Encephalitozoon cuniculi (strain GB-M1) (Microsporidian parasite), this protein is UPF0329 protein ECU07_1860/ECU10_0040/ECU11_2100.